The following is a 214-amino-acid chain: Probable transaldolase (214 aa).

Lys83 acts as the Schiff-base intermediate with substrate in catalysis.

Belongs to the transaldolase family. Type 3B subfamily.

The protein localises to the cytoplasm. The enzyme catalyses D-sedoheptulose 7-phosphate + D-glyceraldehyde 3-phosphate = D-erythrose 4-phosphate + beta-D-fructose 6-phosphate. It participates in carbohydrate degradation; pentose phosphate pathway; D-glyceraldehyde 3-phosphate and beta-D-fructose 6-phosphate from D-ribose 5-phosphate and D-xylulose 5-phosphate (non-oxidative stage): step 2/3. Its function is as follows. Transaldolase is important for the balance of metabolites in the pentose-phosphate pathway. The sequence is that of Probable transaldolase from Streptococcus pyogenes serotype M2 (strain MGAS10270).